A 525-amino-acid polypeptide reads, in one-letter code: Asparagine synthetase domain-containing protein YML096W (525 aa).

Catalysis depends on C2, which acts as the For GATase activity. The 208-residue stretch at 2-209 folds into the Glutamine amidotransferase type-2 domain; the sequence is CGILLHYCPN…LNSNQRSHLP (208 aa). An Asparagine synthetase domain is found at 210-523; sequence YEVTSEIDLN…GTDLLKENRN (314 aa). A disordered region spans residues 503 to 525; sequence SAKMTKDGNKHGTDLLKENRNCS. Positions 506–525 are enriched in basic and acidic residues; it reads MTKDGNKHGTDLLKENRNCS.

Its subcellular location is the cytoplasm. This Saccharomyces cerevisiae (strain ATCC 204508 / S288c) (Baker's yeast) protein is Asparagine synthetase domain-containing protein YML096W.